Here is a 128-residue protein sequence, read N- to C-terminus: Large ribosomal subunit protein bL12 (128 aa).

This sequence belongs to the bacterial ribosomal protein bL12 family. In terms of assembly, homodimer. Part of the ribosomal stalk of the 50S ribosomal subunit. Forms a multimeric L10(L12)X complex, where L10 forms an elongated spine to which 2 to 4 L12 dimers bind in a sequential fashion. Binds GTP-bound translation factors.

Functionally, forms part of the ribosomal stalk which helps the ribosome interact with GTP-bound translation factors. Is thus essential for accurate translation. In Synechocystis sp. (strain ATCC 27184 / PCC 6803 / Kazusa), this protein is Large ribosomal subunit protein bL12.